We begin with the raw amino-acid sequence, 132 residues long: Small ribosomal subunit protein uS15 (132 aa).

The protein belongs to the universal ribosomal protein uS15 family. As to quaternary structure, part of the 30S ribosomal subunit.

The protein is Small ribosomal subunit protein uS15 of Methanobrevibacter smithii (strain ATCC 35061 / DSM 861 / OCM 144 / PS).